A 108-amino-acid chain; its full sequence is uncharacterized protein (108 aa).

Helical transmembrane passes span 32–52 and 68–88; these read YFFF…LLAI and SYLL…LVVG.

Its subcellular location is the membrane. This is an uncharacterized protein from Saccharomyces cerevisiae (strain ATCC 204508 / S288c) (Baker's yeast).